The chain runs to 153 residues: Small ribosomal subunit protein uS9 (153 aa).

Residues 1 to 19 (MTAPADEAPAVEDAPVAED) show a composition bias toward low complexity. Disordered stretches follow at residues 1–23 (MTAP…IAPV) and 121–153 (LKKA…YSKR). Residues 129–138 (RDSREKERKK) are compositionally biased toward basic and acidic residues. Positions 139–153 (YGLKKARKAPQYSKR) are enriched in basic residues.

Belongs to the universal ribosomal protein uS9 family.

This Saccharopolyspora erythraea (strain ATCC 11635 / DSM 40517 / JCM 4748 / NBRC 13426 / NCIMB 8594 / NRRL 2338) protein is Small ribosomal subunit protein uS9.